We begin with the raw amino-acid sequence, 437 residues long: GTPase Obg (437 aa).

Positions 2–160 (SMFLDTAKVS…RQLELELKIL (159 aa)) constitute an Obg domain. Residues 161-338 (ADVGLVGFPS…LLEATAELLA (178 aa)) enclose the OBG-type G domain. GTP is bound by residues 167–174 (GFPSVGKS), 192–196 (FTTIV), 214–217 (DLPG), 284–287 (NKMD), and 319–321 (SSL). Residues Ser174 and Thr194 each coordinate Mg(2+). The OCT domain maps to 359–437 (GFAAEEKAFE…IGKFEFEFVD (79 aa)).

It belongs to the TRAFAC class OBG-HflX-like GTPase superfamily. OBG GTPase family. As to quaternary structure, monomer. The cofactor is Mg(2+).

The protein localises to the cytoplasm. Functionally, an essential GTPase which binds GTP, GDP and possibly (p)ppGpp with moderate affinity, with high nucleotide exchange rates and a fairly low GTP hydrolysis rate. Plays a role in control of the cell cycle, stress response, ribosome biogenesis and in those bacteria that undergo differentiation, in morphogenesis control. The chain is GTPase Obg from Streptococcus equi subsp. equi (strain 4047).